A 100-amino-acid polypeptide reads, in one-letter code: Small ribosomal subunit protein uS14c (100 aa).

This sequence belongs to the universal ribosomal protein uS14 family. Part of the 30S ribosomal subunit.

The protein localises to the plastid. It is found in the chloroplast. Binds 16S rRNA, required for the assembly of 30S particles. This is Small ribosomal subunit protein uS14c from Guillardia theta (Cryptophyte).